The sequence spans 448 residues: T-box transcription factor T homolog 1 (448 aa).

The segment at residues 54 to 224 (LWDKFNALTN…YNPFAKAFLD (171 aa)) is a DNA-binding region (T-box). Disordered regions lie at residues 290–312 (APYP…TAAS) and 401–448 (TTAS…PPSL). Residues 417 to 442 (STDSGYGHSTTPPAPQTRITSNNWSP) are compositionally biased toward polar residues.

Its subcellular location is the nucleus. In terms of biological role, involved in the transcriptional regulation of genes required for mesoderm formation and differentiation. The protein is T-box transcription factor T homolog 1 of Branchiostoma floridae (Florida lancelet).